A 189-amino-acid polypeptide reads, in one-letter code: Ribosome maturation factor RimM (189 aa).

In terms of domain architecture, PRC barrel spans 96–169; the sequence is EDEFFQTDLI…TLLVEPYAAG (74 aa). A disordered region spans residues 170–189; that stretch reads LIADDEDERPQNEKKKPKKS.

Belongs to the RimM family. In terms of assembly, binds ribosomal protein uS19.

The protein resides in the cytoplasm. Functionally, an accessory protein needed during the final step in the assembly of 30S ribosomal subunit, possibly for assembly of the head region. Essential for efficient processing of 16S rRNA. May be needed both before and after RbfA during the maturation of 16S rRNA. It has affinity for free ribosomal 30S subunits but not for 70S ribosomes. This Brucella anthropi (strain ATCC 49188 / DSM 6882 / CCUG 24695 / JCM 21032 / LMG 3331 / NBRC 15819 / NCTC 12168 / Alc 37) (Ochrobactrum anthropi) protein is Ribosome maturation factor RimM.